The sequence spans 196 residues: ATP-dependent Clp protease proteolytic subunit (196 aa).

Residue serine 96 is the Nucleophile of the active site. Residue histidine 121 is part of the active site.

The protein belongs to the peptidase S14 family. Fourteen ClpP subunits assemble into 2 heptameric rings which stack back to back to give a disk-like structure with a central cavity, resembling the structure of eukaryotic proteasomes.

The protein resides in the cytoplasm. The catalysed reaction is Hydrolysis of proteins to small peptides in the presence of ATP and magnesium. alpha-casein is the usual test substrate. In the absence of ATP, only oligopeptides shorter than five residues are hydrolyzed (such as succinyl-Leu-Tyr-|-NHMec, and Leu-Tyr-Leu-|-Tyr-Trp, in which cleavage of the -Tyr-|-Leu- and -Tyr-|-Trp bonds also occurs).. Functionally, cleaves peptides in various proteins in a process that requires ATP hydrolysis. Has a chymotrypsin-like activity. Plays a major role in the degradation of misfolded proteins. This Streptococcus thermophilus (strain CNRZ 1066) protein is ATP-dependent Clp protease proteolytic subunit.